The chain runs to 259 residues: Phosphoadenosine 5'-phosphosulfate reductase (259 aa).

The Nucleophile; cysteine thiosulfonate intermediate role is filled by Cys244.

The protein belongs to the PAPS reductase family. CysH subfamily.

It is found in the cytoplasm. The enzyme catalyses [thioredoxin]-disulfide + sulfite + adenosine 3',5'-bisphosphate + 2 H(+) = [thioredoxin]-dithiol + 3'-phosphoadenylyl sulfate. It participates in sulfur metabolism; hydrogen sulfide biosynthesis; sulfite from sulfate: step 3/3. Functionally, catalyzes the formation of sulfite from phosphoadenosine 5'-phosphosulfate (PAPS) using thioredoxin as an electron donor. In Vibrio campbellii (strain ATCC BAA-1116), this protein is Phosphoadenosine 5'-phosphosulfate reductase.